A 501-amino-acid chain; its full sequence is Probable Xaa-Pro aminopeptidase pepP (501 aa).

The segment at Met1 to Arg25 is disordered. Residues Ser12 to Arg25 show a composition bias toward polar residues. Mn(2+) contacts are provided by Asp298, Asp309, Glu432, and Glu472.

This sequence belongs to the peptidase M24B family. Requires Mn(2+) as cofactor.

It catalyses the reaction Release of any N-terminal amino acid, including proline, that is linked to proline, even from a dipeptide or tripeptide.. Catalyzes the removal of a penultimate prolyl residue from the N-termini of peptides. This chain is Probable Xaa-Pro aminopeptidase pepP (pepP), found in Metarhizium acridum (strain CQMa 102).